Reading from the N-terminus, the 160-residue chain is SIVTKAIVNADAEARYLSPGELDRIKSFVAGGASRLRIAQVLTENRERIVKQAGDQLFQKRPDVVSPGGNAYGQEMTATCLRDLDYYLRLVTYGIVSGDVTPIEEIGIVGVREMYKSLGTPIDAVAGGVAAMKNVAATLLSAEDSSEAGSYFDYVVGAMQ.

N70 carries the N4-methylasparagine modification. C80 contributes to the (2R,3E)-phycocyanobilin binding site.

It belongs to the phycobiliprotein family. As to quaternary structure, component of the phycobilisome. Heterodimer of an alpha and a beta chain. In terms of processing, contains one covalently linked phycocyanobilin chromophore.

The protein resides in the cellular thylakoid membrane. In terms of biological role, light-harvesting photosynthetic bile pigment-protein from the phycobiliprotein complex. Allophycocyanin has a maximum absorption at approximately 650 nanometers. In Anabaena cylindrica, this protein is Allophycocyanin alpha chain (apcA).